Here is a 426-residue protein sequence, read N- to C-terminus: Histidine--tRNA ligase (426 aa).

Belongs to the class-II aminoacyl-tRNA synthetase family. As to quaternary structure, homodimer.

The protein localises to the cytoplasm. It catalyses the reaction tRNA(His) + L-histidine + ATP = L-histidyl-tRNA(His) + AMP + diphosphate + H(+). The polypeptide is Histidine--tRNA ligase (Streptococcus pyogenes serotype M5 (strain Manfredo)).